The sequence spans 509 residues: Maturase K (509 aa).

Belongs to the intron maturase 2 family. MatK subfamily.

It localises to the plastid. It is found in the chloroplast. Its function is as follows. Usually encoded in the trnK tRNA gene intron. Probably assists in splicing its own and other chloroplast group II introns. The protein is Maturase K of Nicotiana acuminata (Acuminate tobacco).